Here is a 669-residue protein sequence, read N- to C-terminus: tRNA 5-methylaminomethyl-2-thiouridine biosynthesis bifunctional protein MnmC (669 aa).

The interval 1–246 (MIKNANIHFN…KRSMLIGTLK (246 aa)) is tRNA (mnm(5)s(2)U34)-methyltransferase. The FAD-dependent cmnm(5)s(2)U34 oxidoreductase stretch occupies residues 271 to 669 (IGGGIASSCI…IVRDLIRNKI (399 aa)).

In the N-terminal section; belongs to the methyltransferase superfamily. tRNA (mnm(5)s(2)U34)-methyltransferase family. This sequence in the C-terminal section; belongs to the DAO family. Requires FAD as cofactor.

Its subcellular location is the cytoplasm. It carries out the reaction 5-aminomethyl-2-thiouridine(34) in tRNA + S-adenosyl-L-methionine = 5-methylaminomethyl-2-thiouridine(34) in tRNA + S-adenosyl-L-homocysteine + H(+). Catalyzes the last two steps in the biosynthesis of 5-methylaminomethyl-2-thiouridine (mnm(5)s(2)U) at the wobble position (U34) in tRNA. Catalyzes the FAD-dependent demodification of cmnm(5)s(2)U34 to nm(5)s(2)U34, followed by the transfer of a methyl group from S-adenosyl-L-methionine to nm(5)s(2)U34, to form mnm(5)s(2)U34. The protein is tRNA 5-methylaminomethyl-2-thiouridine biosynthesis bifunctional protein MnmC of Pseudoalteromonas translucida (strain TAC 125).